Reading from the N-terminus, the 160-residue chain is MKIYTQRLEDISPDQAFETVELTFDTRQKSRFRAALASGVDIGADLPRTGILRSGSYIATQEGDVLRVDAKPERLMKVTAQTEFDLLKAAYHLGNRHVPLMLTPTALYFEPDHVLAEMVEGLGLTVTETDHPFEPESGAYAQHSHDHRLSPIKALHHVHS.

It belongs to the UreE family.

It localises to the cytoplasm. Its function is as follows. Involved in urease metallocenter assembly. Binds nickel. Probably functions as a nickel donor during metallocenter assembly. This Acinetobacter baumannii (strain AB307-0294) protein is Urease accessory protein UreE.